Here is a 176-residue protein sequence, read N- to C-terminus: Protein MAL2 (176 aa).

Residues 1 to 34 (MSAGGAPVPPPPNPAMSFPAPRVTLPAGPDILRT) lie on the Cytoplasmic side of the membrane. Residues 31 to 175 (ILRTYSGAFV…SLGLALRRWR (145 aa)) form the MARVEL domain. The helical transmembrane segment at 35–55 (YSGAFVCLEIVFGGLVWILVA) threads the bilayer. Residues 56–66 (SSNVPLPLLQG) lie on the Lumenal side of the membrane. The chain crosses the membrane as a helical span at residues 67 to 87 (WVMFVSVTAFVCSLLFLGVFL). Topologically, residues 88–102 (SGVVTQINANWNFLD) are cytoplasmic. The helical transmembrane segment at 103 to 123 (FAYHFTVFVFYFGAFLLEAAT) threads the bilayer. The Lumenal portion of the chain corresponds to 124 to 149 (TSLHDLRCNRTMTVQPLLSDNQYNIN). N132 is a glycosylation site (N-linked (GlcNAc...) asparagine). The helical transmembrane segment at 150–170 (VAATIFAFVTTACYGCSLGLA) threads the bilayer. Over 171–176 (LRRWRP) the chain is Cytoplasmic.

It belongs to the MAL family. As to quaternary structure, interacts with TPD52L2.

Its subcellular location is the cell membrane. It is found in the apical cell membrane. Its function is as follows. Member of the machinery of polarized transport. Required for the indirect transcytotic route at the step of the egress of the transcytosing cargo from perinuclear endosomes in order for it to travel to the apical surface via a raft-dependent pathway. The polypeptide is Protein MAL2 (MAL2) (Bos taurus (Bovine)).